We begin with the raw amino-acid sequence, 1405 residues long: Protein translocase subunit SecA (1405 aa).

The segment at 1-1099 (MHMKIKKFKK…SDYKKLNEDE (1099 aa)) is protein translocase subunit SecA. ATP-binding positions include Q88, 106–110 (GEGKS), and D494. Positions 1100–1405 (SDDDIKAFYK…LDYLKENNKK (306 aa)) are unknown.

It belongs to the SecA family. As to quaternary structure, monomer and homodimer. Part of the essential Sec protein translocation apparatus which comprises SecA, SecYEG and auxiliary proteins SecDF. Other proteins may also be involved.

It localises to the cell membrane. The protein resides in the cytoplasm. The catalysed reaction is ATP + H2O + cellular proteinSide 1 = ADP + phosphate + cellular proteinSide 2.. Part of the Sec protein translocase complex. Interacts with the SecYEG preprotein conducting channel. Has a central role in coupling the hydrolysis of ATP to the transfer of proteins into and across the cell membrane, serving as an ATP-driven molecular motor driving the stepwise translocation of polypeptide chains across the membrane. This Malacoplasma penetrans (strain HF-2) (Mycoplasma penetrans) protein is Protein translocase subunit SecA.